The sequence spans 92 residues: UPF0250 protein VV0902 (92 aa).

Belongs to the UPF0250 family.

This chain is UPF0250 protein VV0902, found in Vibrio vulnificus (strain YJ016).